The following is a 237-amino-acid chain: Cytosolic-abundant heat soluble protein 86272 (237 aa).

Residues 96–125 (FKDQEKYSREQAAIARAHDKDLEKKTEEYR) are disordered. Over residues 111–125 (RAHDKDLEKKTEEYR) the composition is skewed to basic and acidic residues. Residues 115 to 193 (KDLEKKTEEY…MNALEQSKMA (79 aa)) adopt a coiled-coil conformation. CAHS motif stretches follow at residues 124–142 (YRKT…LEKQ) and 161–179 (QKRE…LEHE). Residues 204 to 215 (AGTTVSGGTTVS) show a composition bias toward low complexity. Positions 204 to 237 (AGTTVSGGTTVSEHTEVHDGKEKKSLGEKIKSLF) are disordered. Basic and acidic residues predominate over residues 216-237 (EHTEVHDGKEKKSLGEKIKSLF).

This sequence belongs to the Cytosolic-abundant heat soluble protein (CAHS) family.

It localises to the cytoplasm. In terms of biological role, CAHS proteins are cytosolic heat soluble proteins that seem to contribute to the anhydrobiosis in tardigrades, but their specific mechanisms are yet to be identified. It is possible that protection during anhydrobiosis might occur via the stabilization of vitrifying small molecules such as sugars, but not via the direct glass transition of CAHS proteins themselves. This is Cytosolic-abundant heat soluble protein 86272 from Hypsibius exemplaris (Freshwater tardigrade).